We begin with the raw amino-acid sequence, 697 residues long: Trishanku (697 aa).

Positions 1–94 (MEIEPVVRIS…NNNSNSNGTD (94 aa)) are disordered. A compositionally biased stretch (low complexity) spans 12–47 (NGNNNQNNNNNNNNNTNNNSNNNNNNNNSSNINSTN). Residues 58-72 (KMISNINNQKSPNPL) show a composition bias toward polar residues. Residues 73–91 (NSSVDDNNNTNNNNNSNSN) show a composition bias toward low complexity. In terms of domain architecture, BTB spans 122-189 (SDVIFKVGDR…ICIGILDLDY (68 aa)). Residues 311-455 (IQQQQQQQQQ…DSANDDYEYS (145 aa)) are disordered. Residues 312–331 (QQQQQQQQQQLQSANGASGK) are compositionally biased toward low complexity. Residues 332–344 (SHGKRSSSSHLKK) are compositionally biased toward basic residues. The segment covering 353-363 (GSCSSRCSSRR) has biased composition (low complexity). Acidic residues predominate over residues 416-453 (DDFENDSEDGDDDDEDDDEDDDFTDDDDKDDSANDDYE).

In terms of tissue distribution, expressed strongly in presumptive spore (prespore or psp) cells during the late G2 phase of cell cycle. Present at a low level in vegetative cells.

Required for normal morphogenesis and cell-type stability. The chain is Trishanku (triA) from Dictyostelium discoideum (Social amoeba).